Reading from the N-terminus, the 203-residue chain is Bone marrow stromal antigen 2 (203 aa).

Over 1 to 26 the chain is Cytoplasmic; it reads MAPTFYHYHPLPMDQKEPGCGIRWRC. Residues 27–47 traverse the membrane as a helical; Signal-anchor for type II membrane protein segment; it reads LAAASVLILVALVIPLIIFAV. At 48–183 the chain is on the extracellular side; sequence KANSEACRDG…EASITSKQNS (136 aa). N-linked (GlcNAc...) asparagine glycans are attached at residues asparagine 66 and asparagine 93. A coiled-coil region spans residues 66–178; that stretch reads NTTRLLQRQL…LRTAEEASIT (113 aa). A lipid anchor (GPI-anchor amidated serine) is attached at serine 183. Residues 184-203 constitute a propeptide, removed in mature form; it reads AGSMAVSSLLVLAVPLFLLF.

As to quaternary structure, parallel homodimer; disulfide-linked. May form homotetramers under reducing conditions. Isoform 1 and isoform 2 form homodimers and also heterodimers with each other. Dimerization is essential for its antiviral activity. Interacts (via cytoplasmic domain) with ARHGAP44. Interacts with MMP14 (via C-terminal cytoplasmic tail). Interacts with LILRA4/ILT7. Interacts with RNF115. Post-translationally, the GPI anchor is essential for its antiviral activity.

The protein localises to the golgi apparatus. It localises to the trans-Golgi network. It is found in the cell membrane. The protein resides in the late endosome. Its subcellular location is the membrane raft. The protein localises to the cytoplasm. It localises to the apical cell membrane. Its function is as follows. IFN-induced antiviral host restriction factor which efficiently blocks the release of diverse mammalian enveloped viruses by directly tethering nascent virions to the membranes of infected cells. Acts as a direct physical tether, holding virions to the cell membrane and linking virions to each other. The tethered virions can be internalized by endocytosis and subsequently degraded or they can remain on the cell surface. In either case, their spread as cell-free virions is restricted. Its target viruses belong to diverse families, including retroviridae: human immunodeficiency virus type 1 (HIV-1), mouse mammary tumor virus (MMTV) and murine leukemia virus (MLV), filoviridae: ebola virus (EBOV), arenaviridae: lassa virus (LASV), and rhabdoviridae: vesicular stomatitis virus (VSV). Can inhibit cell surface proteolytic activity of MMP14 causing decreased activation of MMP15 which results in inhibition of cell growth and migration. Can stimulate signaling by LILRA4/ILT7 and consequently provide negative feedback to the production of IFN by plasmacytoid dendritic cells in response to viral infection. Plays a role in the organization of the subapical actin cytoskeleton in polarized epithelial cells. This is Bone marrow stromal antigen 2 (Bst2) from Cricetulus griseus (Chinese hamster).